Here is a 417-residue protein sequence, read N- to C-terminus: Transmembrane protease serine 11D (417 aa).

Over 1–17 (MYRPRSMVSPSRFFNPF) the chain is Cytoplasmic. The chain crosses the membrane as a helical; Signal-anchor for type II membrane protein span at residues 18–38 (MVALIVIITVGLLAMTAGLLI). Residues 39 to 417 (HFLAFDKRAY…RNWIRQQTGI (379 aa)) are Extracellular-facing. One can recognise an SEA domain in the interval 46-162 (RAYFYHSNFH…SNGITSLTDQ (117 aa)). Intrachain disulfides connect Cys172/Cys291, Cys211/Cys227, Cys336/Cys352, and Cys363/Cys392. The Peptidase S1 domain maps to 186–416 (IIGGTQAETG…YRNWIRQQTG (231 aa)). Residues His226 and Asp271 each act as charge relay system in the active site. Ser367 (charge relay system) is an active-site residue.

It belongs to the peptidase S1 family. Monomer. Isoform 1 and isoform 2 are expressed in the esophagus, tongue and trachea. Isoform 2 is also highly expressed in the adrenal cortex and heart.

It is found in the cell membrane. The protein resides in the secreted. In terms of biological role, may play some biological role in the host defense system on the mucous membrane independently of or in cooperation with other substances in airway mucous or bronchial secretions. Plays a role in the proteolytic processing of ACE2. Preferentially cleaves the C-terminal side of arginine residues at the P1 position of certain peptides. Isoform 2 may play a key role in regulating adrenal proliferation by specifically cleaving N-POMC. The sequence is that of Transmembrane protease serine 11D (Tmprss11d) from Rattus norvegicus (Rat).